The following is a 305-amino-acid chain: Putative ankyrin repeat protein RF_0580 (305 aa).

7 ANK repeats span residues 5-34, 39-68, 72-101, 107-136, 140-169, 173-202, and 206-235; these read YNKNNLFAKLAYGDLSEVQALLKSGVNIDE, RGETALYNTLFTGYMDRAAFLLKHKASPNI, SGQTILYLLVMNNSIDKMKFLFENTTNIDL, CGHSPLHAATFNENIEAMELLLKKGADINS, FGASALHGTIYNNKLKAAELLLNHGADVNA, YEDTILHNIIGTNNIEAAKFLLQNGADVNI, and NNFTPLDRAILGQHKELAELFLKSGATIKI.

This chain is Putative ankyrin repeat protein RF_0580, found in Rickettsia felis (strain ATCC VR-1525 / URRWXCal2) (Rickettsia azadi).